We begin with the raw amino-acid sequence, 207 residues long: LexA repressor (207 aa).

Residues 28-48 (VREIGEAVGLASSSTVHGHLA) constitute a DNA-binding region (H-T-H motif). Catalysis depends on for autocatalytic cleavage activity residues serine 129 and lysine 167.

It belongs to the peptidase S24 family. As to quaternary structure, homodimer.

The enzyme catalyses Hydrolysis of Ala-|-Gly bond in repressor LexA.. Represses a number of genes involved in the response to DNA damage (SOS response), including recA and lexA. In the presence of single-stranded DNA, RecA interacts with LexA causing an autocatalytic cleavage which disrupts the DNA-binding part of LexA, leading to derepression of the SOS regulon and eventually DNA repair. This Geobacillus sp. (strain WCH70) protein is LexA repressor.